A 125-amino-acid chain; its full sequence is Small ribosomal subunit protein uS12 (125 aa).

Residues 9-31 (RQGREVEKIKSKSPAMENSPQRR) are disordered. D89 carries the post-translational modification 3-methylthioaspartic acid. The tract at residues 105 to 125 (QGVKDRKQSRSKYGAKRPKAK) is disordered. A compositionally biased stretch (basic residues) spans 113–125 (SRSKYGAKRPKAK).

Belongs to the universal ribosomal protein uS12 family. Part of the 30S ribosomal subunit. Contacts proteins S8 and S17. May interact with IF1 in the 30S initiation complex.

Functionally, with S4 and S5 plays an important role in translational accuracy. Interacts with and stabilizes bases of the 16S rRNA that are involved in tRNA selection in the A site and with the mRNA backbone. Located at the interface of the 30S and 50S subunits, it traverses the body of the 30S subunit contacting proteins on the other side and probably holding the rRNA structure together. The combined cluster of proteins S8, S12 and S17 appears to hold together the shoulder and platform of the 30S subunit. The sequence is that of Small ribosomal subunit protein uS12 from Polaromonas naphthalenivorans (strain CJ2).